Reading from the N-terminus, the 343-residue chain is Anthranilate phosphoribosyltransferase (343 aa).

5-phospho-alpha-D-ribose 1-diphosphate-binding positions include G84, G87–D88, T92, N94–T97, K112–S120, and S124. G84 is a binding site for anthranilate. S96 serves as a coordination point for Mg(2+). Residue N115 participates in anthranilate binding. Position 170 (R170) interacts with anthranilate. Positions 229 and 230 each coordinate Mg(2+).

This sequence belongs to the anthranilate phosphoribosyltransferase family. Homodimer. It depends on Mg(2+) as a cofactor.

The catalysed reaction is N-(5-phospho-beta-D-ribosyl)anthranilate + diphosphate = 5-phospho-alpha-D-ribose 1-diphosphate + anthranilate. The protein operates within amino-acid biosynthesis; L-tryptophan biosynthesis; L-tryptophan from chorismate: step 2/5. In terms of biological role, catalyzes the transfer of the phosphoribosyl group of 5-phosphorylribose-1-pyrophosphate (PRPP) to anthranilate to yield N-(5'-phosphoribosyl)-anthranilate (PRA). This is Anthranilate phosphoribosyltransferase from Burkholderia thailandensis (strain ATCC 700388 / DSM 13276 / CCUG 48851 / CIP 106301 / E264).